Here is a 595-residue protein sequence, read N- to C-terminus: Estrogen receptor (595 aa).

The tract at residues Met-1–Tyr-184 is modulating(transactivation AF-1); mediates interaction with MACROD1. A glycan (O-linked (GlcNAc) serine) is linked at Ser-10. The tract at residues Leu-35–Ser-47 is required for interaction with NCOA1. Residues Leu-35–Met-174 are interaction with DDX5; self-association. Phosphoserine; by CDK2 is present on residues Ser-103 and Ser-105. Residue Ser-118 is modified to Phosphoserine. Residues Asp-143–Met-174 are disordered. Basic and acidic residues predominate over residues Ser-154–Leu-165. Ser-167 carries the post-translational modification Phosphoserine; by CK2. NR C4-type zinc fingers lie at residues Cys-185–Cys-205 and Cys-221–Cys-245. Residues Cys-185–Met-250 constitute a DNA-binding region (nuclear receptor). The mediates interaction with DNTTIP2 stretch occupies residues Cys-185–Leu-310. The tract at residues Met-251 to Leu-310 is hinge. The residue at position 260 (Arg-260) is an Asymmetric dimethylarginine; by PRMT1. Residues Arg-260–Arg-269 are compositionally biased toward basic residues. The tract at residues Arg-260–Asp-285 is disordered. An interaction with AKAP13 region spans residues Gly-262–Ile-595. The self-association stretch occupies residues Met-264 to Ile-595. Residues Thr-311 to His-547 form the NR LBD domain. Residues Thr-311–Ile-595 are transactivation AF-2. 17beta-estradiol is bound by residues Glu-353 and Arg-394. Cys-447 carries the S-palmitoyl cysteine lipid modification. Residue His-524 participates in 17beta-estradiol binding. Residue Tyr-537 is modified to Phosphotyrosine; by Tyr-kinases. The tract at residues Ser-554 to Ser-578 is disordered. Low complexity predominate over residues Ser-564–Ser-578. Thr-571 is a glycosylation site (O-linked (GlcNAc) threonine).

This sequence belongs to the nuclear hormone receptor family. NR3 subfamily. In terms of assembly, binds DNA as a homodimer. Can form a heterodimer with ESR2. Interacts with coactivator NCOA5. Interacts with PELP1, the interaction is enhanced by 17-beta-estradiol; the interaction increases ESR1 transcriptional activity. Interacts with NCOA7; the interaction is ligand-inducible. Interacts with AKAP13, CUEDC2, HEXIM1, KDM5A, MAP1S, SMARD1, and UBE1C. Interacts with MUC1; the interaction is stimulated by 7 beta-estradiol (E2) and enhances ESR1-mediated transcription. Interacts with DNTTIP2, and UIMC1. Interacts with KMT2D/MLL2. Interacts with ATAD2; the interaction is enhanced by estradiol. Interacts with KIF18A and LDB1. Interacts with RLIM (via its C-terminus). Interacts with MACROD1. Interacts with SH2D4A and PLCG. Interacts with SH2D4A; the interaction blocks binding to PLCG and inhibits estrogen-induced cell proliferation. Interacts with DYNLL1. Interacts with CCDC62; the interaction requires estradiol and appears to enhance the transcription of target genes. Interacts with NR2C1; the interaction prevents homodimerization of ESR1 and suppresses its transcriptional activity and cell growth. Interacts with DNAAF4. Interacts with PRMT2. Interacts with RBFOX2. Interacts with EP300; the interaction is estrogen-dependent and enhanced by CITED1. Interacts with CITED1; the interaction is estrogen-dependent. Interacts with FAM120B, FOXL2, PHB2 and SLC30A9. Interacts with coactivators NCOA3 and NCOA6. Interacts with STK3/MST2 only in the presence of SAV1 and vice-versa. Binds to CSNK1D. Interacts with NCOA2; NCOA2 can interact with ESR1 AF-1 and AF-2 domains simultaneously and mediate their transcriptional synergy. Interacts with DDX5. Interacts with NCOA1; the interaction seems to require a self-association of N-terminal and C-terminal regions. Interacts with ZNF366, DDX17, NFKB1, RELA, SP1 and SP3. Interacts with NRIP1. Interacts with GPER1; the interaction occurs in an estrogen-dependent manner. Interacts with CLOCK and the interaction is stimulated by estrogen. Interacts with TRIP4 (ufmylated); estrogen dependent. Interacts with LMTK3; the interaction phosphorylates ESR1 (in vitro) and protects it against proteasomal degradation. Interacts with CCAR2 (via N-terminus) in a ligand-independent manner. Interacts with ZFHX3. Interacts with SFR1 in a ligand-dependent and -independent manner. Interacts with DCAF13, LATS1 and DCAF1; regulates ESR1 ubiquitination and ubiquitin-mediated proteasomal degradation. Interacts (via DNA-binding domain) with POU4F2 (C-terminus); this interaction increases the estrogen receptor ESR1 transcriptional activity in a DNA- and ligand 17-beta-estradiol-independent manner. Interacts with ESRRB isoform 1. Interacts with UBE3A and WBP2. Interacts with GTF2B. Interacts with RBM39. In the absence of hormonal ligand, interacts with TACC1. Interacts with PI3KR1 or PI3KR2 and PTK2/FAK1. Interacts with SRC. Interacts with BAG1; the interaction is promoted in the absence of estradiol (17-beta-estradiol/E2). Interacts with and ubiquitinated by STUB1; the interaction is promoted in the absence of estradiol (17-beta-estradiol/E2). Interacts with NEDD8. In terms of processing, ubiquitinated; regulated by LATS1 via DCAF1 it leads to ESR1 proteasomal degradation. Deubiquitinated by OTUB1. Ubiquitinated by STUB1/CHIP; in the CA1 hippocampal region following loss of endogenous circulating estradiol (17-beta-estradiol/E2). Ubiquitinated by UBR5, leading to its degradation: UBR5 specifically recognizes and binds ligand-bound ESR1 when it is not associated with coactivators (NCOAs). In presence of NCOAs, the UBR5-degron is not accessible, preventing its ubiquitination and degradation. Phosphorylated by cyclin A/CDK2 and CK1. Phosphorylation probably enhances transcriptional activity. Dephosphorylation at Ser-118 by PPP5C inhibits its transactivation activity. Phosphorylated by LMTK3 (in vitro). Post-translationally, palmitoylated at Cys-447 by ZDHHC7 and ZDHHC21. Palmitoylation is required for plasma membrane targeting and for rapid intracellular signaling via ERK and AKT kinases and cAMP generation, but not for signaling mediated by the nuclear hormone receptor. In terms of processing, dimethylated by PRMT1 at Arg-260. The methylation may favor cytoplasmic localization. Demethylated by JMJD6 at Arg-260.

It is found in the nucleus. Its subcellular location is the cytoplasm. It localises to the golgi apparatus. The protein resides in the cell membrane. Its function is as follows. Nuclear hormone receptor. The steroid hormones and their receptors are involved in the regulation of eukaryotic gene expression and affect cellular proliferation and differentiation in target tissues. Ligand-dependent nuclear transactivation involves either direct homodimer binding to a palindromic estrogen response element (ERE) sequence or association with other DNA-binding transcription factors, such as AP-1/c-Jun, c-Fos, ATF-2, Sp1 and Sp3, to mediate ERE-independent signaling. Ligand binding induces a conformational change allowing subsequent or combinatorial association with multiprotein coactivator complexes through LXXLL motifs of their respective components. Mutual transrepression occurs between the estrogen receptor (ER) and NF-kappa-B in a cell-type specific manner. Decreases NF-kappa-B DNA-binding activity and inhibits NF-kappa-B-mediated transcription from the IL6 promoter and displace RELA/p65 and associated coregulators from the promoter. Recruited to the NF-kappa-B response element of the CCL2 and IL8 promoters and can displace CREBBP. Present with NF-kappa-B components RELA/p65 and NFKB1/p50 on ERE sequences. Can also act synergistically with NF-kappa-B to activate transcription involving respective recruitment adjacent response elements; the function involves CREBBP. Can activate the transcriptional activity of TFF1. Also mediates membrane-initiated estrogen signaling involving various kinase cascades. Essential for MTA1-mediated transcriptional regulation of BRCA1 and BCAS3. Maintains neuronal survival in response to ischemic reperfusion injury when in the presence of circulating estradiol (17-beta-estradiol/E2). This chain is Estrogen receptor (ESR1), found in Mesocricetus auratus (Golden hamster).